The chain runs to 228 residues: MNIITTTTTDTTTALLRLMAWLSPVFPVGSFSYSHGLERAVHDGYVADTATMSDWLRWLVTRGSGWNDAVLCAESWRRAVAKGDLVEVAELAEALAGSRERHMETMLQGEAFLAAARSWPSSVFDRLPADCPYPVAVGAVAGANKVSLGLTLAAFLQAFCINLLQASIRLSVMGQNGVTATMSDLEPVLAETATRIEKTSLSDLGSATYISDIMAMKHETQHSRLFRT.

The protein belongs to the UreF family. As to quaternary structure, ureD, UreF and UreG form a complex that acts as a GTP-hydrolysis-dependent molecular chaperone, activating the urease apoprotein by helping to assemble the nickel containing metallocenter of UreC. The UreE protein probably delivers the nickel.

The protein localises to the cytoplasm. Functionally, required for maturation of urease via the functional incorporation of the urease nickel metallocenter. The protein is Urease accessory protein UreF 1 of Brucella anthropi (strain ATCC 49188 / DSM 6882 / CCUG 24695 / JCM 21032 / LMG 3331 / NBRC 15819 / NCTC 12168 / Alc 37) (Ochrobactrum anthropi).